The chain runs to 404 residues: Cysteine desulfurase IscS (404 aa).

Residues 75–76 (AT), Asn155, Gln183, and 203–205 (SGH) each bind pyridoxal 5'-phosphate. N6-(pyridoxal phosphate)lysine is present on Lys206. Residue Thr243 participates in pyridoxal 5'-phosphate binding. Cys328 (cysteine persulfide intermediate) is an active-site residue. A [2Fe-2S] cluster-binding site is contributed by Cys328.

Belongs to the class-V pyridoxal-phosphate-dependent aminotransferase family. NifS/IscS subfamily. Homodimer. Forms a heterotetramer with IscU, interacts with other sulfur acceptors. The cofactor is pyridoxal 5'-phosphate.

It localises to the cytoplasm. It carries out the reaction (sulfur carrier)-H + L-cysteine = (sulfur carrier)-SH + L-alanine. Its pathway is cofactor biosynthesis; iron-sulfur cluster biosynthesis. In terms of biological role, master enzyme that delivers sulfur to a number of partners involved in Fe-S cluster assembly, tRNA modification or cofactor biosynthesis. Catalyzes the removal of elemental sulfur atoms from cysteine to produce alanine. Functions as a sulfur delivery protein for Fe-S cluster synthesis onto IscU, an Fe-S scaffold assembly protein, as well as other S acceptor proteins. The chain is Cysteine desulfurase IscS from Shewanella baltica (strain OS185).